Consider the following 378-residue polypeptide: Chaperone protein DnaJ (378 aa).

The 66-residue stretch at 5 to 70 (DYYEVLGVGR…NKKAAYDQFG (66 aa)) folds into the J domain. A CR-type zinc finger spans residues 134 to 212 (GLTKELRIPT…CHGDGRVEKT (79 aa)). Zn(2+) is bound by residues cysteine 147, cysteine 150, cysteine 164, cysteine 167, cysteine 186, cysteine 189, cysteine 200, and cysteine 203. CXXCXGXG motif repeat units follow at residues 147-154 (CDVCDGSG), 164-171 (CTTCHGQG), 186-193 (CPTCHGRG), and 200-207 (CAKCHGDG).

Belongs to the DnaJ family. In terms of assembly, homodimer. Zn(2+) is required as a cofactor.

It is found in the cytoplasm. Participates actively in the response to hyperosmotic and heat shock by preventing the aggregation of stress-denatured proteins and by disaggregating proteins, also in an autonomous, DnaK-independent fashion. Unfolded proteins bind initially to DnaJ; upon interaction with the DnaJ-bound protein, DnaK hydrolyzes its bound ATP, resulting in the formation of a stable complex. GrpE releases ADP from DnaK; ATP binding to DnaK triggers the release of the substrate protein, thus completing the reaction cycle. Several rounds of ATP-dependent interactions between DnaJ, DnaK and GrpE are required for fully efficient folding. Also involved, together with DnaK and GrpE, in the DNA replication of plasmids through activation of initiation proteins. This chain is Chaperone protein DnaJ, found in Shewanella oneidensis (strain ATCC 700550 / JCM 31522 / CIP 106686 / LMG 19005 / NCIMB 14063 / MR-1).